Here is a 424-residue protein sequence, read N- to C-terminus: Serine--tRNA ligase (424 aa).

231–233 (TAE) contacts L-serine. 262 to 264 (RAE) is a binding site for ATP. Glutamate 285 lines the L-serine pocket. Position 349–352 (349–352 (EISS)) interacts with ATP. Serine 385 provides a ligand contact to L-serine.

The protein belongs to the class-II aminoacyl-tRNA synthetase family. Type-1 seryl-tRNA synthetase subfamily. As to quaternary structure, homodimer. The tRNA molecule binds across the dimer.

Its subcellular location is the cytoplasm. It catalyses the reaction tRNA(Ser) + L-serine + ATP = L-seryl-tRNA(Ser) + AMP + diphosphate + H(+). The catalysed reaction is tRNA(Sec) + L-serine + ATP = L-seryl-tRNA(Sec) + AMP + diphosphate + H(+). The protein operates within aminoacyl-tRNA biosynthesis; selenocysteinyl-tRNA(Sec) biosynthesis; L-seryl-tRNA(Sec) from L-serine and tRNA(Sec): step 1/1. In terms of biological role, catalyzes the attachment of serine to tRNA(Ser). Is also able to aminoacylate tRNA(Sec) with serine, to form the misacylated tRNA L-seryl-tRNA(Sec), which will be further converted into selenocysteinyl-tRNA(Sec). This chain is Serine--tRNA ligase, found in Geobacillus kaustophilus (strain HTA426).